Consider the following 214-residue polypeptide: Protein PsaE (214 aa).

An N-terminal signal peptide occupies residues 1–24 (MSHCVVLNKLESVLIIGDSRYALS). Positions 1 to 94 (MSHCVVLNKL…YKNEGYSYQK (94 aa)) form a DNA-binding region, ompR/PhoB-type.

Functionally, required for expression of pH 6 antigen. This chain is Protein PsaE (psaE), found in Yersinia pseudotuberculosis serotype I (strain IP32953).